We begin with the raw amino-acid sequence, 278 residues long: UPF0758 protein BURPS1106A_0984 (278 aa).

Positions 1–64 (MQYEIVSAGE…ATAAARRGRD (64 aa)) are disordered. Low complexity predominate over residues 22 to 59 (AAAPAAPSSAVPSSAALSSAALSSAAQPTGAPPATAAA). The region spanning 156–278 (LVDSPGAVDD…TFSFAQAGWI (123 aa)) is the MPN domain. Zn(2+) contacts are provided by H227, H229, and D240. The JAMM motif motif lies at 227–240 (HNHPSGAVRPSAAD).

This sequence belongs to the UPF0758 family.

This Burkholderia pseudomallei (strain 1106a) protein is UPF0758 protein BURPS1106A_0984.